The chain runs to 593 residues: UvrABC system protein C (593 aa).

A GIY-YIG domain is found at M17–I94. The 36-residue stretch at K199–L234 folds into the UVR domain.

Belongs to the UvrC family. In terms of assembly, interacts with UvrB in an incision complex.

The protein localises to the cytoplasm. The UvrABC repair system catalyzes the recognition and processing of DNA lesions. UvrC both incises the 5' and 3' sides of the lesion. The N-terminal half is responsible for the 3' incision and the C-terminal half is responsible for the 5' incision. This Staphylococcus aureus (strain Mu3 / ATCC 700698) protein is UvrABC system protein C.